A 234-amino-acid chain; its full sequence is Ribose-5-phosphate isomerase A (234 aa).

Substrate is bound by residues 28 to 31, 83 to 86, and 96 to 99; these read TGST, DGAD, and KGGG. E105 functions as the Proton acceptor in the catalytic mechanism. Substrate is bound at residue K123.

Belongs to the ribose 5-phosphate isomerase family. Homodimer.

The catalysed reaction is aldehydo-D-ribose 5-phosphate = D-ribulose 5-phosphate. It participates in carbohydrate degradation; pentose phosphate pathway; D-ribose 5-phosphate from D-ribulose 5-phosphate (non-oxidative stage): step 1/1. Functionally, catalyzes the reversible conversion of ribose-5-phosphate to ribulose 5-phosphate. The sequence is that of Ribose-5-phosphate isomerase A from Bartonella quintana (strain Toulouse) (Rochalimaea quintana).